The chain runs to 337 residues: Sideroflexin-4 (337 aa).

The residue at position 2 (serine 2) is an N-acetylserine. 3 consecutive transmembrane segments (helical) span residues 111–131 (AAFLPFMAPTVFLSMTPLKGI), 133–153 (SVILPQVFLCAYMAAFNSING), and 165–185 (SLLMAGAVASSTFLGVIPQFV). Lysine 197 carries the N6-acetyllysine modification. Helical transmembrane passes span 251–271 (ASRIVLFGTSALIPEVFTYFF) and 293–313 (VLAMGLMVPFSFSIFPQIGQI).

Belongs to the sideroflexin family.

The protein resides in the mitochondrion inner membrane. In terms of biological role, mitochondrial amino-acid transporter. Does not act as a serine transporter: not able to mediate transport of serine into mitochondria. This chain is Sideroflexin-4, found in Homo sapiens (Human).